An 89-amino-acid chain; its full sequence is Small ribosomal subunit protein uS15 (89 aa).

The protein belongs to the universal ribosomal protein uS15 family. In terms of assembly, part of the 30S ribosomal subunit. Forms a bridge to the 50S subunit in the 70S ribosome, contacting the 23S rRNA.

In terms of biological role, one of the primary rRNA binding proteins, it binds directly to 16S rRNA where it helps nucleate assembly of the platform of the 30S subunit by binding and bridging several RNA helices of the 16S rRNA. Forms an intersubunit bridge (bridge B4) with the 23S rRNA of the 50S subunit in the ribosome. This chain is Small ribosomal subunit protein uS15, found in Kocuria rhizophila (strain ATCC 9341 / DSM 348 / NBRC 103217 / DC2201).